Here is a 101-residue protein sequence, read N- to C-terminus: Large ribosomal subunit protein bL28 (101 aa).

It belongs to the bacterial ribosomal protein bL28 family.

This chain is Large ribosomal subunit protein bL28, found in Rhodopseudomonas palustris (strain BisB18).